A 198-amino-acid polypeptide reads, in one-letter code: Imidazole glycerol phosphate synthase subunit HisH (198 aa).

Positions 1 to 194 constitute a Glutamine amidotransferase type-1 domain; that stretch reads MIAIIDYGLG…LKGGFQDDQT (194 aa). The active-site Nucleophile is the Cys-77. Catalysis depends on residues His-169 and Glu-171.

As to quaternary structure, heterodimer of HisH and HisF.

Its subcellular location is the cytoplasm. The catalysed reaction is 5-[(5-phospho-1-deoxy-D-ribulos-1-ylimino)methylamino]-1-(5-phospho-beta-D-ribosyl)imidazole-4-carboxamide + L-glutamine = D-erythro-1-(imidazol-4-yl)glycerol 3-phosphate + 5-amino-1-(5-phospho-beta-D-ribosyl)imidazole-4-carboxamide + L-glutamate + H(+). It catalyses the reaction L-glutamine + H2O = L-glutamate + NH4(+). The protein operates within amino-acid biosynthesis; L-histidine biosynthesis; L-histidine from 5-phospho-alpha-D-ribose 1-diphosphate: step 5/9. Its function is as follows. IGPS catalyzes the conversion of PRFAR and glutamine to IGP, AICAR and glutamate. The HisH subunit catalyzes the hydrolysis of glutamine to glutamate and ammonia as part of the synthesis of IGP and AICAR. The resulting ammonia molecule is channeled to the active site of HisF. This Staphylococcus saprophyticus subsp. saprophyticus (strain ATCC 15305 / DSM 20229 / NCIMB 8711 / NCTC 7292 / S-41) protein is Imidazole glycerol phosphate synthase subunit HisH.